Here is a 453-residue protein sequence, read N- to C-terminus: 3-phosphoshikimate 1-carboxyvinyltransferase (453 aa).

A compositionally biased stretch (polar residues) spans 1–12 (MDVNVTSSTVRG). A disordered region spans residues 1-21 (MDVNVTSSTVRGTTRAPPSKS). 3-phosphoshikimate-binding residues include K20, S21, and R25. K20 is a binding site for phosphoenolpyruvate. Phosphoenolpyruvate-binding residues include G97 and R125. 6 residues coordinate 3-phosphoshikimate: S170, S171, Q172, S198, D330, and K357. Q172 serves as a coordination point for phosphoenolpyruvate. The active-site Proton acceptor is the D330. The phosphoenolpyruvate site is built by R361 and R404.

This sequence belongs to the EPSP synthase family. As to quaternary structure, monomer.

It localises to the cytoplasm. It carries out the reaction 3-phosphoshikimate + phosphoenolpyruvate = 5-O-(1-carboxyvinyl)-3-phosphoshikimate + phosphate. It participates in metabolic intermediate biosynthesis; chorismate biosynthesis. Catalyzes the transfer of the enolpyruvyl moiety of phosphoenolpyruvate (PEP) to the 5-hydroxyl of shikimate-3-phosphate (S3P) to produce enolpyruvyl shikimate-3-phosphate and inorganic phosphate. This chain is 3-phosphoshikimate 1-carboxyvinyltransferase, found in Halorubrum lacusprofundi (strain ATCC 49239 / DSM 5036 / JCM 8891 / ACAM 34).